The primary structure comprises 150 residues: Interferon antagonist OPG027 (150 aa).

Belongs to the orthopoxvirus OPG027 family.

Functionally, inhibits antiviral activity induced by type I interferons. Does not block signal transduction of IFN, but is important to counteract the host antiviral state induced by a pre-treatment with IFN. The polypeptide is Interferon antagonist OPG027 (OPG027) (Vaccinia virus (strain Ankara) (VACV)).